Consider the following 372-residue polypeptide: 4-hydroxy-3-methylbut-2-en-1-yl diphosphate synthase (flavodoxin) (372 aa).

[4Fe-4S] cluster is bound by residues Cys-270, Cys-273, Cys-305, and Glu-312.

It belongs to the IspG family. [4Fe-4S] cluster serves as cofactor.

It catalyses the reaction (2E)-4-hydroxy-3-methylbut-2-enyl diphosphate + oxidized [flavodoxin] + H2O + 2 H(+) = 2-C-methyl-D-erythritol 2,4-cyclic diphosphate + reduced [flavodoxin]. Its pathway is isoprenoid biosynthesis; isopentenyl diphosphate biosynthesis via DXP pathway; isopentenyl diphosphate from 1-deoxy-D-xylulose 5-phosphate: step 5/6. In terms of biological role, converts 2C-methyl-D-erythritol 2,4-cyclodiphosphate (ME-2,4cPP) into 1-hydroxy-2-methyl-2-(E)-butenyl 4-diphosphate. The chain is 4-hydroxy-3-methylbut-2-en-1-yl diphosphate synthase (flavodoxin) from Enterobacter sp. (strain 638).